Reading from the N-terminus, the 187-residue chain is MINVNEFKPGITFEDEGNIYVVLTAQHSKQGRGQANVKAKVKNLRTGSTTLKSYTGGDKVQKAHIEKKPMDYLYNDGSNIILMDQESFEQIEIDVKKVEWELNFLTEGMKILVRQYQNEILDIEIPINIELKVINAPDAVKGNTTTNPQKKVIVETGYELEVPMFIKEGETIIVSSETGKYGGKSSK.

This sequence belongs to the elongation factor P family.

Its subcellular location is the cytoplasm. The protein operates within protein biosynthesis; polypeptide chain elongation. In terms of biological role, involved in peptide bond synthesis. Stimulates efficient translation and peptide-bond synthesis on native or reconstituted 70S ribosomes in vitro. Probably functions indirectly by altering the affinity of the ribosome for aminoacyl-tRNA, thus increasing their reactivity as acceptors for peptidyl transferase. This chain is Elongation factor P, found in Mycoplasmopsis pulmonis (strain UAB CTIP) (Mycoplasma pulmonis).